The following is a 477-amino-acid chain: UTP--glucose-1-phosphate uridylyltransferase (477 aa).

Alanine 2 is modified (N-acetylalanine). UTP is bound by residues 92–95, lysine 106, glutamine 169, and glycine 198; that span reads LNGG. Substrate is bound at residue 94-95; sequence GG. Substrate-binding positions include histidine 199 and 227–229; that span reads NSD. The UTP site is built by aspartate 229 and lysine 367.

This sequence belongs to the UDPGP type 1 family. As to quaternary structure, monomer. It depends on Mg(2+) as a cofactor.

It localises to the cytoplasm. The enzyme catalyses alpha-D-glucose 1-phosphate + UTP + H(+) = UDP-alpha-D-glucose + diphosphate. Its activity is regulated as follows. Inhibition by uncomplexed, free UTP. Plays a central role as a glucosyl donor in cellular metabolic pathways. In Solanum tuberosum (Potato), this protein is UTP--glucose-1-phosphate uridylyltransferase.